A 320-amino-acid chain; its full sequence is MNSENLTRAAVAPAEFVLLGITNRWDLRVALFLTCLPVYLVSLLGNMGMALLIRMDARLHTPMYFFLANLSLLDACYSSAIGPKMLVDLLLPRATIPYTACALQMFVFAGLADTECCLLAAMAYDRYVAIRNPLLYTTAMSQRLCLALLGASGLGGAVSAFVHTTLTFRLSFCRSRKINSFFCDIPPLLAISCSDTSLNELLLFAICGFIQTATVLAITVSYGFIAGAVIHMRSVEGSRRAASTGGSHLTAVAMMYGTLIFMYLRPSSSYALDTDKMASVFYTLVIPSLNPLIYSLRNKEVKEALRQTWSRFHCPGQGSQ.

At 1–29 (MNSENLTRAAVAPAEFVLLGITNRWDLRV) the chain is on the extracellular side. N-linked (GlcNAc...) asparagine glycosylation is present at N5. The chain crosses the membrane as a helical span at residues 30-50 (ALFLTCLPVYLVSLLGNMGMA). Residues 51 to 58 (LLIRMDAR) lie on the Cytoplasmic side of the membrane. Residues 59-79 (LHTPMYFFLANLSLLDACYSS) traverse the membrane as a helical segment. At 80-103 (AIGPKMLVDLLLPRATIPYTACAL) the chain is on the extracellular side. C101 and C193 are oxidised to a cystine. Residues 104 to 124 (QMFVFAGLADTECCLLAAMAY) form a helical membrane-spanning segment. At 125–143 (DRYVAIRNPLLYTTAMSQR) the chain is on the cytoplasmic side. The helical transmembrane segment at 144–164 (LCLALLGASGLGGAVSAFVHT) threads the bilayer. Residues 165 to 200 (TLTFRLSFCRSRKINSFFCDIPPLLAISCSDTSLNE) are Extracellular-facing. A helical membrane pass occupies residues 201–221 (LLLFAICGFIQTATVLAITVS). At 222–241 (YGFIAGAVIHMRSVEGSRRA) the chain is on the cytoplasmic side. Residues 242-262 (ASTGGSHLTAVAMMYGTLIFM) form a helical membrane-spanning segment. The Extracellular segment spans residues 263–275 (YLRPSSSYALDTD). Residues 276–296 (KMASVFYTLVIPSLNPLIYSL) traverse the membrane as a helical segment. Residues 297–320 (RNKEVKEALRQTWSRFHCPGQGSQ) lie on the Cytoplasmic side of the membrane.

The protein belongs to the G-protein coupled receptor 1 family.

It is found in the cell membrane. In terms of biological role, odorant receptor. The chain is Olfactory receptor 5C1 (OR5C1) from Homo sapiens (Human).